The primary structure comprises 122 residues: Holo-[acyl-carrier-protein] synthase (122 aa).

Positions 8 and 56 each coordinate Mg(2+).

It belongs to the P-Pant transferase superfamily. AcpS family. Mg(2+) is required as a cofactor.

The protein resides in the cytoplasm. The enzyme catalyses apo-[ACP] + CoA = holo-[ACP] + adenosine 3',5'-bisphosphate + H(+). Its function is as follows. Transfers the 4'-phosphopantetheine moiety from coenzyme A to a Ser of acyl-carrier-protein. This Alkaliphilus metalliredigens (strain QYMF) protein is Holo-[acyl-carrier-protein] synthase.